Reading from the N-terminus, the 392-residue chain is Selenide, water dikinase 1 (392 aa).

The residue at position 2 (S2) is an N-acetylserine. C31 is an active-site residue. Residues K32, 67-69 (GMD), D87, D110, and 161-164 (GGQT) contribute to the ATP site. Position 69 (D69) interacts with Mg(2+). D110 is a binding site for Mg(2+). Residue D265 participates in Mg(2+) binding.

Belongs to the selenophosphate synthase 1 family. Class II subfamily. In terms of assembly, homodimer. Mg(2+) is required as a cofactor.

The protein resides in the cell membrane. It is found in the nucleus membrane. The catalysed reaction is hydrogenselenide + ATP + H2O = selenophosphate + AMP + phosphate + 2 H(+). In terms of biological role, synthesizes selenophosphate from selenide and ATP. This is Selenide, water dikinase 1 (Sephs1) from Mus musculus (Mouse).